A 185-amino-acid chain; its full sequence is Iron-sulfur assembly protein 2 (185 aa).

Fe cation is bound by residues C89, C175, and C177.

The protein belongs to the HesB/IscA family.

It is found in the mitochondrion matrix. Its function is as follows. Involved in the assembly of mitochondrial and cytoplasmic iron-sulfur proteins. Probably involved in the binding of an intermediate of Fe/S cluster assembly. This Saccharomyces cerevisiae (strain ATCC 204508 / S288c) (Baker's yeast) protein is Iron-sulfur assembly protein 2 (ISA2).